Reading from the N-terminus, the 156-residue chain is Transcriptional repressor NrdR (156 aa).

The segment at 3–34 (CPKCNSTHSRVVDSRHADEANAIRRRRECENC) is a zinc-finger region. The ATP-cone domain maps to 49-139 (LIVVKKDGTR…VYKEFKDVDQ (91 aa)).

The protein belongs to the NrdR family. Requires Zn(2+) as cofactor.

Functionally, negatively regulates transcription of bacterial ribonucleotide reductase nrd genes and operons by binding to NrdR-boxes. In Staphylococcus epidermidis (strain ATCC 35984 / DSM 28319 / BCRC 17069 / CCUG 31568 / BM 3577 / RP62A), this protein is Transcriptional repressor NrdR.